A 602-amino-acid chain; its full sequence is Elongation factor 4 (602 aa).

Residues 2–184 (NHIRNFSIIA…QIVAKVPAPR (183 aa)) enclose the tr-type G domain. GTP-binding positions include 14 to 19 (DHGKST) and 131 to 134 (NKMD).

Belongs to the TRAFAC class translation factor GTPase superfamily. Classic translation factor GTPase family. LepA subfamily.

Its subcellular location is the cell inner membrane. It carries out the reaction GTP + H2O = GDP + phosphate + H(+). Functionally, required for accurate and efficient protein synthesis under certain stress conditions. May act as a fidelity factor of the translation reaction, by catalyzing a one-codon backward translocation of tRNAs on improperly translocated ribosomes. Back-translocation proceeds from a post-translocation (POST) complex to a pre-translocation (PRE) complex, thus giving elongation factor G a second chance to translocate the tRNAs correctly. Binds to ribosomes in a GTP-dependent manner. This Acidovorax ebreus (strain TPSY) (Diaphorobacter sp. (strain TPSY)) protein is Elongation factor 4.